Reading from the N-terminus, the 427-residue chain is Glutamate-1-semialdehyde 2,1-aminomutase (427 aa).

At Lys-265 the chain carries N6-(pyridoxal phosphate)lysine.

Belongs to the class-III pyridoxal-phosphate-dependent aminotransferase family. HemL subfamily. In terms of assembly, homodimer. Pyridoxal 5'-phosphate is required as a cofactor.

It localises to the cytoplasm. The catalysed reaction is (S)-4-amino-5-oxopentanoate = 5-aminolevulinate. The protein operates within porphyrin-containing compound metabolism; protoporphyrin-IX biosynthesis; 5-aminolevulinate from L-glutamyl-tRNA(Glu): step 2/2. The protein is Glutamate-1-semialdehyde 2,1-aminomutase of Edwardsiella ictaluri (strain 93-146).